The chain runs to 73 residues: Omega-conotoxin GVIA (73 aa).

An N-terminal signal peptide occupies residues 1 to 22; sequence MKLTCVVIVAVLLLTACQLITA. The propeptide occupies 23–45; the sequence is DDSRGTQKHRALGSTTELSLSTR. Intrachain disulfides connect C46–C61, C53–C64, and C60–C71. A 4-hydroxyproline mark is found at P49, P55, and P66. Tyrosine amide; in form omega-conotoxin GVIA is present on Y72.

It belongs to the conotoxin O1 superfamily. Expressed by the venom duct.

It localises to the secreted. Functionally, omega-conotoxins act at presynaptic membranes, they bind and block voltage-gated calcium channels (Cav). This toxin blocks N-type calcium channels (Cav2.2/CACNA1B) with a high potency (it displaces [125I]GVIA with an IC(50)=3.7-38 pM). The protein is Omega-conotoxin GVIA of Conus geographus (Geography cone).